Reading from the N-terminus, the 360-residue chain is Photosystem II protein D1 (360 aa).

The next 3 helical transmembrane spans lie at 30-47 (YVGW…AAAA), 119-134 (HFLI…QWEL), and 143-157 (WICV…AAFA). Position 119 (His119) interacts with chlorophyll a. Residue Tyr127 participates in pheophytin a binding. [CaMn4O5] cluster contacts are provided by Asp171 and Glu190. Residues 198 to 219 (FHMAGVAGMFGGSLFSAMHGSL) traverse the membrane as a helical segment. His199 contributes to the chlorophyll a binding site. Residues His216 and 265–266 (SF) each bind a quinone. His216 contacts Fe cation. His273 contributes to the Fe cation binding site. The chain crosses the membrane as a helical span at residues 275–289 (FLAVFPVVCVWLTSM). 4 residues coordinate [CaMn4O5] cluster: His333, Glu334, Asp343, and Ala345. The propeptide occupies 346–360 (AAESTTVALTAPAIG).

It belongs to the reaction center PufL/M/PsbA/D family. As to quaternary structure, PSII is composed of 1 copy each of membrane proteins PsbA, PsbB, PsbC, PsbD, PsbE, PsbF, PsbH, PsbI, PsbJ, PsbK, PsbL, PsbM, PsbT, PsbX, PsbY, Psb30/Ycf12, peripheral proteins PsbO, CyanoQ (PsbQ), PsbU, PsbV and a large number of cofactors. It forms dimeric complexes. It depends on The D1/D2 heterodimer binds P680, chlorophylls that are the primary electron donor of PSII, and subsequent electron acceptors. It shares a non-heme iron and each subunit binds pheophytin, quinone, additional chlorophylls, carotenoids and lipids. D1 provides most of the ligands for the Mn4-Ca-O5 cluster of the oxygen-evolving complex (OEC). There is also a Cl(-1) ion associated with D1 and D2, which is required for oxygen evolution. The PSII complex binds additional chlorophylls, carotenoids and specific lipids. as a cofactor. In terms of processing, tyr-162 forms a radical intermediate that is referred to as redox-active TyrZ, YZ or Y-Z. Post-translationally, C-terminally processed by CtpA; processing is essential to allow assembly of the oxygen-evolving complex and thus photosynthetic growth.

The protein resides in the cellular thylakoid membrane. It carries out the reaction 2 a plastoquinone + 4 hnu + 2 H2O = 2 a plastoquinol + O2. Functionally, photosystem II (PSII) is a light-driven water:plastoquinone oxidoreductase that uses light energy to abstract electrons from H(2)O, generating O(2) and a proton gradient subsequently used for ATP formation. It consists of a core antenna complex that captures photons, and an electron transfer chain that converts photonic excitation into a charge separation. The D1/D2 (PsbA/PsbD) reaction center heterodimer binds P680, the primary electron donor of PSII as well as several subsequent electron acceptors. This Prochlorococcus marinus (strain MIT 9515) protein is Photosystem II protein D1.